The following is a 376-amino-acid chain: Protein-glutamate methylesterase/protein-glutamine glutaminase 1 (376 aa).

A Response regulatory domain is found at 4 to 121 (KVLVVDDSSF…ARNRDEAVSL (118 aa)). Asp-55 bears the 4-aspartylphosphate mark. A disordered region spans residues 138–174 (RPVASSTPVQERPQSTLNRPTTGLRREAPAQAPVSRA). Residues 141–158 (ASSTPVQERPQSTLNRPT) are compositionally biased toward polar residues. In terms of domain architecture, CheB-type methylesterase spans 183 to 376 (SGKKYQLTAI…ERMLVEVGLA (194 aa)). Residues Ser-195, His-222, and Asp-318 contribute to the active site.

Belongs to the CheB family. Post-translationally, phosphorylated by CheA. Phosphorylation of the N-terminal regulatory domain activates the methylesterase activity.

The protein resides in the cytoplasm. It catalyses the reaction [protein]-L-glutamate 5-O-methyl ester + H2O = L-glutamyl-[protein] + methanol + H(+). It carries out the reaction L-glutaminyl-[protein] + H2O = L-glutamyl-[protein] + NH4(+). Its function is as follows. Involved in chemotaxis. Part of a chemotaxis signal transduction system that modulates chemotaxis in response to various stimuli. Catalyzes the demethylation of specific methylglutamate residues introduced into the chemoreceptors (methyl-accepting chemotaxis proteins or MCP) by CheR. Also mediates the irreversible deamidation of specific glutamine residues to glutamic acid. In Vibrio vulnificus (strain CMCP6), this protein is Protein-glutamate methylesterase/protein-glutamine glutaminase 1.